The chain runs to 237 residues: MTKLSVNINKVATLRNARGGDTPNVVKVALDCEAFGADGITVHPRPDERHIRRADVYDLRPLLRTEFNIEGYPSPEFIDLVLKVKPHQVTLVPDDPSQITSNSGWDTKANLEFLSEVLDQFNSAGIRTSVFVAADPEMVEYAAKAGADRVELYTEPYATAYPKNPEAAVAPFVEAAKTARKLGIGLNAGHDLSLVNLNYFYKNIPWVDEVSIGHALISDALYLGLERTIQEYKNCLR.

N7 and R18 together coordinate 3-amino-2-oxopropyl phosphate. Catalysis depends on H43, which acts as the Proton acceptor. 1-deoxy-D-xylulose 5-phosphate is bound by residues R45 and H50. E70 serves as the catalytic Proton acceptor. T100 lines the 1-deoxy-D-xylulose 5-phosphate pocket. The active-site Proton donor is the H190. 3-amino-2-oxopropyl phosphate is bound by residues D191 and 213–214 (GH).

This sequence belongs to the PNP synthase family. Homooctamer; tetramer of dimers.

It localises to the cytoplasm. The enzyme catalyses 3-amino-2-oxopropyl phosphate + 1-deoxy-D-xylulose 5-phosphate = pyridoxine 5'-phosphate + phosphate + 2 H2O + H(+). The protein operates within cofactor biosynthesis; pyridoxine 5'-phosphate biosynthesis; pyridoxine 5'-phosphate from D-erythrose 4-phosphate: step 5/5. Its function is as follows. Catalyzes the complicated ring closure reaction between the two acyclic compounds 1-deoxy-D-xylulose-5-phosphate (DXP) and 3-amino-2-oxopropyl phosphate (1-amino-acetone-3-phosphate or AAP) to form pyridoxine 5'-phosphate (PNP) and inorganic phosphate. The sequence is that of Pyridoxine 5'-phosphate synthase from Bacteroides thetaiotaomicron (strain ATCC 29148 / DSM 2079 / JCM 5827 / CCUG 10774 / NCTC 10582 / VPI-5482 / E50).